A 260-amino-acid chain; its full sequence is uncharacterized protein (260 aa).

Transmembrane regions (helical) follow at residues 39-59, 68-88, 111-131, 159-179, 193-213, and 214-234; these read IFYLLFIPLSKNFIYTDLIEA, IIVGIYLSYPIFLYQIWSFLI, FLGSCIGYYLLFPIAFTFFLG, LIFSLSICFQLPVLILFLFKI, FIYLFFFILAAILSPPDILSQ, and FILVIPLILFFEISLFCIKLI.

The protein belongs to the TatC family.

Its subcellular location is the mitochondrion membrane. This is an uncharacterized protein from Reclinomonas americana.